Here is a 695-residue protein sequence, read N- to C-terminus: MSANKNIWIIRLGVAFVCVAIGAAQANEKDGSAVTSGNWSLLGGGNEQHYFSALKDVNKSNVKNLGLSWFTDMEAGDGLVGNPLVADGVIYQGGPPGKIYANDLKTGKNLWTYTPEVQYDKDTSWTGFWGTHVNRGLAVDDDNVYIGSYCKLLAVSRTTHKLTWSSQSCDPKKMQAITGAPRVGGGKVFIGNASGDFGGDRGHLDAFDAKTGKHLWRFYTMPGDPSKPFENDLLAKASKTWGTDYWKYTKGGVSPWDAITYDEASDTLYFGTDGPSPWSPAQRAPDAGDELFSHSIIAVDASTGAYKWHFQTVQNDGSNMSATMHIMLADLPVEGVSKRVVMTAPKNGYFYVLDASTGKFISADHYVPVNWTKGLDPKTGRPIPSNEANYWERPGEMTIPLPGDVGGHNWEAMAYNPELRTVYIPSTLVPVTVVASKDTGELDLDYYYGMRPDATIKTQGDLVAWDPLLQKEKWRAKRSLPVNGGVLATAGGLVFQGTGDGHFEAFDANTGEKLWSFHVGGSILAAPTTVEVDGDQYLIVASGNGGASGMRGIPRLMNNLQSQGPARLLAFRLGGKTELPITSTPDFPKPQYPKPTSAMAESGRHIFNANACGACHGFNAEGSTPGLPDLRRSDKLDLAVMKSIVIDGAFKPLGMPGHPHISDADLQALQAFILQKAWTAYDTQQTLKTSDTGAQ.

Residues 1 to 26 (MSANKNIWIIRLGVAFVCVAIGAAQA) form the signal peptide. The Cytochrome c domain maps to 598–677 (AMAESGRHIF…ALQAFILQKA (80 aa)). Heme c-binding residues include Cys-612, Cys-615, and His-616.

This sequence belongs to the bacterial PQQ dehydrogenase family. Monomer. The cofactor is pyrroloquinoline quinone. Requires heme c as cofactor.

It localises to the periplasm. It carries out the reaction lupanine + 2 Fe(III)-[cytochrome c] + H2O = 17-hydroxylupanine + 2 Fe(II)-[cytochrome c] + 2 H(+). Its function is as follows. Catalyzes the first reaction in the catabolism of the alkaloid lupanine. It dehydrogenates lupanine, which can then be hydrated to produce 17-hydroxylupanine. The chain is Lupanine 17-hydroxylase [cytochrome c] (luh) from Pseudomonas sp.